The sequence spans 145 residues: Small ribosomal subunit protein uS9 (145 aa).

A compositionally biased stretch (polar residues) spans 1–13; the sequence is MATDQHSNKSNVS. The segment at 1–24 is disordered; that stretch reads MATDQHSNKSNVSAARKPLSPSPT.

The protein belongs to the universal ribosomal protein uS9 family.

It is found in the cytoplasm. In Lupinus polyphyllus (Large-leaved lupine), this protein is Small ribosomal subunit protein uS9 (RPS16).